Consider the following 465-residue polypeptide: tRNA-2-methylthio-N(6)-dimethylallyladenosine synthase (465 aa).

The 121-residue stretch at 5-125 (RKLHIKSFGC…LPELLEKARR (121 aa)) folds into the MTTase N-terminal domain. Cysteine 14, cysteine 50, cysteine 88, cysteine 166, cysteine 170, and cysteine 173 together coordinate [4Fe-4S] cluster. The Radical SAM core domain occupies 152-382 (RARGVSAFVT…QLQGLIDSQQ (231 aa)). The TRAM domain occupies 387–449 (RASIGTTVDV…RYSLIGELVK (63 aa)).

Belongs to the methylthiotransferase family. MiaB subfamily. As to quaternary structure, monomer. [4Fe-4S] cluster serves as cofactor.

The protein resides in the cytoplasm. The enzyme catalyses N(6)-dimethylallyladenosine(37) in tRNA + (sulfur carrier)-SH + AH2 + 2 S-adenosyl-L-methionine = 2-methylsulfanyl-N(6)-dimethylallyladenosine(37) in tRNA + (sulfur carrier)-H + 5'-deoxyadenosine + L-methionine + A + S-adenosyl-L-homocysteine + 2 H(+). Functionally, catalyzes the methylthiolation of N6-(dimethylallyl)adenosine (i(6)A), leading to the formation of 2-methylthio-N6-(dimethylallyl)adenosine (ms(2)i(6)A) at position 37 in tRNAs that read codons beginning with uridine. This is tRNA-2-methylthio-N(6)-dimethylallyladenosine synthase from Rhodopseudomonas palustris (strain BisA53).